Here is a 701-residue protein sequence, read N- to C-terminus: Polyribonucleotide nucleotidyltransferase (701 aa).

Mg(2+)-binding residues include aspartate 480 and aspartate 486. The KH domain maps to 547–606; that stretch reads PKIDTIKIDVDKIKVVIGKGGETIDKIIAETGVKIDIDDEGNVSIYSSDQAAINRTKEII. Positions 616 to 684 constitute an S1 motif domain; the sequence is GEVYHAKVVR…EKGRVDASMK (69 aa). Positions 682 to 701 are disordered; the sequence is SMKALIPRPPKPEKKEEKHD. Residues 691–701 are compositionally biased toward basic and acidic residues; it reads PKPEKKEEKHD.

The protein belongs to the polyribonucleotide nucleotidyltransferase family. It depends on Mg(2+) as a cofactor.

It is found in the cytoplasm. It carries out the reaction RNA(n+1) + phosphate = RNA(n) + a ribonucleoside 5'-diphosphate. Involved in mRNA degradation. Catalyzes the phosphorolysis of single-stranded polyribonucleotides processively in the 3'- to 5'-direction. The sequence is that of Polyribonucleotide nucleotidyltransferase from Streptococcus pyogenes serotype M12 (strain MGAS2096).